The primary structure comprises 90 residues: Large ribosomal subunit protein bL31 (90 aa).

Residues 65 to 90 (YSKQEGSGSKSNKSKSTKSKKGKGKK) form a disordered region. Residues 76–90 (NKSKSTKSKKGKGKK) show a composition bias toward basic residues.

This sequence belongs to the bacterial ribosomal protein bL31 family. Type A subfamily. Part of the 50S ribosomal subunit.

Its function is as follows. Binds the 23S rRNA. The protein is Large ribosomal subunit protein bL31 of Trichodesmium erythraeum (strain IMS101).